The chain runs to 79 residues: Acyl carrier protein (79 aa).

Residues 2–77 enclose the Carrier domain; it reads SEVADKVKKI…DAVEYIEKQK (76 aa). S37 carries the O-(pantetheine 4'-phosphoryl)serine modification.

The protein belongs to the acyl carrier protein (ACP) family. Post-translationally, 4'-phosphopantetheine is transferred from CoA to a specific serine of apo-ACP by AcpS. This modification is essential for activity because fatty acids are bound in thioester linkage to the sulfhydryl of the prosthetic group.

The protein resides in the cytoplasm. It participates in lipid metabolism; fatty acid biosynthesis. In terms of biological role, carrier of the growing fatty acid chain in fatty acid biosynthesis. The protein is Acyl carrier protein of Granulibacter bethesdensis (strain ATCC BAA-1260 / CGDNIH1).